The following is a 154-amino-acid chain: Protein X (154 aa).

The segment at 68-117 (PCALRFTSARRMETTVNAHQILPKVLHKRTLGLPAMSTTDLEAYFKDCVF) is mitochondrial targeting sequence.

The protein belongs to the orthohepadnavirus protein X family. May form homodimer. May interact with host CEBPA, CFLAR, CREB1, DDB1, E4F1, HBXIP, HSPD1/HSP60, NFKBIA, POLR2E and SMAD4. Interacts with host SMC5-SMC6 complex and induces its degradation. Interacts with host TRPC4AP; leading to prevent ubiquitination of TRPC4AP. Interacts with host PLSCR1; this interaction promotes ubiquitination and degradation of HBx and impairs HBx-mediated cell proliferation. In terms of processing, a fraction may be phosphorylated in insect cells and HepG2 cells, a human hepatoblastoma cell line. Phosphorylated in vitro by host protein kinase C or mitogen-activated protein kinase. N-acetylated in insect cells.

It localises to the host cytoplasm. The protein localises to the host nucleus. The protein resides in the host mitochondrion. Functionally, multifunctional protein that plays a role in silencing host antiviral defenses and promoting viral transcription. Does not seem to be essential for HBV infection. May be directly involved in development of cirrhosis and liver cancer (hepatocellular carcinoma). Most of cytosolic activities involve modulation of cytosolic calcium. The effect on apoptosis is controversial depending on the cell types in which the studies have been conducted. May induce apoptosis by localizing in mitochondria and causing loss of mitochondrial membrane potential. May also modulate apoptosis by binding host CFLAR, a key regulator of the death-inducing signaling complex (DISC). Promotes viral transcription by using the host E3 ubiquitin ligase DDB1 to target the SMC5-SMC6 complex to proteasomal degradation. This host complex would otherwise bind to viral episomal DNA, and prevents its transcription. Moderately stimulates transcription of many different viral and cellular transcription elements. Promoters and enhancers stimulated by HBx contain DNA binding sites for NF-kappa-B, AP-1, AP-2, c-EBP, ATF/CREB, or the calcium-activated factor NF-AT. In Homo sapiens (Human), this protein is Protein X.